The chain runs to 624 residues: Anti-CBASS protein Acb1 (624 aa).

Tyr106 contributes to the 3',3'-cGAMP binding site. Residue Tyr106 coordinates 3',3'-cUAMP. Residues His503, Thr505, His581, and Thr583 contribute to the active site. Trp617 is a 3',3'-cGAMP binding site. Trp617 provides a ligand contact to 3',3'-cUAMP.

It belongs to the anti-CBASS protein Acb1 family.

It carries out the reaction 3',3'-cUAMP + H2O = U[3'-5']pAp[3'] + H(+). The enzyme catalyses 3',3',3'-c-tri-AMP + H2O = A[3'-5']pA[3'-5']pAp[3'] + H(+). It catalyses the reaction 3',3',3'-cAAG + H2O = G[3'-5']pA[3'-5']pAp[3'] + H(+). The catalysed reaction is 3',3',3'-cAAG + H2O = A[3'-5']pG[3'-5']pAp[3'] + H(+). It carries out the reaction 3',3'-cGAMP + H2O = G[3'-5']pAp[3'] + H(+). Its function is as follows. Counteracts or regulates the endogenous CBASS antiviral defense system. Phosphodiesterase that enables metal-independent hydrolysis of the host cyclic di- and trinucleotide CBASS signals such as 3'3'-cGAMP, 3'3'cUA, and 3'3'3'-cAAA. The sequence is that of Anti-CBASS protein Acb1 from Sphingomonas paeninsulae.